Consider the following 290-residue polypeptide: ATP synthase gamma chain (290 aa).

Belongs to the ATPase gamma chain family. In terms of assembly, F-type ATPases have 2 components, CF(1) - the catalytic core - and CF(0) - the membrane proton channel. CF(1) has five subunits: alpha(3), beta(3), gamma(1), delta(1), epsilon(1). CF(0) has three main subunits: a, b and c.

It localises to the cell inner membrane. Its function is as follows. Produces ATP from ADP in the presence of a proton gradient across the membrane. The gamma chain is believed to be important in regulating ATPase activity and the flow of protons through the CF(0) complex. The chain is ATP synthase gamma chain from Bacteroides fragilis (strain YCH46).